The primary structure comprises 501 residues: MLO-like protein 5 (501 aa).

At 1–22 (MAGGGGGSTSGEGPRELDQTPT) the chain is on the extracellular side. The chain crosses the membrane as a helical span at residues 23–43 (WAVSTVCGVIILISIVLELMI). Over 44–68 (HKIGEVFTERRKKALYEALQKIKNE) the chain is Cytoplasmic. The chain crosses the membrane as a helical span at residues 69–89 (LMVLGFISLLLTFGQNYIASL). The Extracellular segment spans residues 90–151 (CVASRYGHAM…ISLNALHQVH (62 aa)). Residues 152-172 (IFIFFLAVFHVIYSAITMMLG) traverse the membrane as a helical segment. Residues 173–273 (RAKIRGWKVW…IKRSLEDDFK (101 aa)) are Cytoplasmic-facing. A helical transmembrane segment spans residues 274–294 (VVVGISPELWAFVMLFLLFDV). Residue His-295 is a topological domain, extracellular. A helical transmembrane segment spans residues 296–316 (GWYVTAVITMIPPLLTLAIGT). Over 317-359 (KLQAIISDMALEIQERHAVIQGMPLVNVSDRHFWFSRPALVLH) the chain is Cytoplasmic. Residues 360–380 (IIHFILFQNAFEITYFFWIWY) traverse the membrane as a helical segment. Residues 381–391 (EFGLRSCFHHH) are Extracellular-facing. Residues 392–412 (FALIIIRVALGVGVQFLCSYI) traverse the membrane as a helical segment. Residues 413 to 501 (TLPLYALVTQ…SQSRDLLSGP (89 aa)) are Cytoplasmic-facing. Residues 443–501 (WHKNAKKKSETPGQTQPPLPNLRPKTGGDIESASPANITASVDVKESDQSQSRDLLSGP) are disordered. The calmodulin-binding stretch occupies residues 450–471 (KSETPGQTQPPLPNLRPKTGGD). Polar residues predominate over residues 491-501 (QSQSRDLLSGP).

The protein belongs to the MLO family.

It localises to the membrane. Its function is as follows. May be involved in modulation of pathogen defense and leaf cell death. Activity seems to be regulated by Ca(2+)-dependent calmodulin binding and seems not to require heterotrimeric G proteins. The sequence is that of MLO-like protein 5 (MLO5) from Arabidopsis thaliana (Mouse-ear cress).